We begin with the raw amino-acid sequence, 71 residues long: MSQLKITQVRSTIGARWKQRESLRTLGLRRIRHSVIREDNPQTRGLIAVVSHLVEVAPADASSAGTGGSKK.

The protein belongs to the universal ribosomal protein uL30 family. As to quaternary structure, part of the 50S ribosomal subunit.

This chain is Large ribosomal subunit protein uL30, found in Mycolicibacterium paratuberculosis (strain ATCC BAA-968 / K-10) (Mycobacterium paratuberculosis).